Consider the following 413-residue polypeptide: Protein arginine N-methyltransferase 2 (413 aa).

2 disordered regions span residues 65–85 and 148–178; these read DDEE…QKSV and ELED…SAPQ. A compositionally biased stretch (acidic residues) spans 148–173; the sequence is ELEDDDEEEEEGQEEQTGTEEVEVEG. Residues 192–413 enclose the RMT2 domain; it reads TGPDVTNSRY…YRLPLCKYMD (222 aa). S-adenosyl-L-methionine is bound by residues Y201, M230, 250-255, 271-273, 298-299, and D318; these read HGMGIV, EAH, and WQ.

The protein belongs to the class I-like SAM-binding methyltransferase superfamily. RMT2 methyltransferase family. Monomer.

It localises to the cytoplasm. It is found in the nucleus. Functionally, S-adenosyl-L-methionine-dependent protein-arginine N-methyltransferase that methylates the delta-nitrogen atom of arginine residues to form N5-methylarginine (type IV) in target proteins. Monomethylates ribosomal protein L12. The protein is Protein arginine N-methyltransferase 2 of Aspergillus oryzae (strain ATCC 42149 / RIB 40) (Yellow koji mold).